A 403-amino-acid polypeptide reads, in one-letter code: Ribose-phosphate pyrophosphokinase 1, chloroplastic (403 aa).

The N-terminal 49 residues, 1–49 (MASLGLSFPPAAKTPTYLASSSSTFFSNSSLSVRTSQFRSRNSVFACVK), are a transit peptide targeting the chloroplast. Mg(2+) contacts are provided by D217, H219, D228, and D232. Positions 303–318 (GKVAIMVDDMIDTAGT) are binding of phosphoribosylpyrophosphate.

The protein belongs to the ribose-phosphate pyrophosphokinase family. Requires Mg(2+) as cofactor.

It is found in the plastid. The protein resides in the chloroplast. The catalysed reaction is D-ribose 5-phosphate + ATP = 5-phospho-alpha-D-ribose 1-diphosphate + AMP + H(+). This chain is Ribose-phosphate pyrophosphokinase 1, chloroplastic (PRS1), found in Arabidopsis thaliana (Mouse-ear cress).